Reading from the N-terminus, the 218-residue chain is GTP cyclohydrolase 1 (218 aa).

Zn(2+) contacts are provided by Cys107, His110, and Cys178.

Belongs to the GTP cyclohydrolase I family. In terms of assembly, homomer.

It carries out the reaction GTP + H2O = 7,8-dihydroneopterin 3'-triphosphate + formate + H(+). It participates in cofactor biosynthesis; 7,8-dihydroneopterin triphosphate biosynthesis; 7,8-dihydroneopterin triphosphate from GTP: step 1/1. This chain is GTP cyclohydrolase 1, found in Azorhizobium caulinodans (strain ATCC 43989 / DSM 5975 / JCM 20966 / LMG 6465 / NBRC 14845 / NCIMB 13405 / ORS 571).